We begin with the raw amino-acid sequence, 90 residues long: Co-chaperonin GroES (90 aa).

This sequence belongs to the GroES chaperonin family. In terms of assembly, heptamer of 7 subunits arranged in a ring. Interacts with the chaperonin GroEL.

The protein resides in the cytoplasm. In terms of biological role, together with the chaperonin GroEL, plays an essential role in assisting protein folding. The GroEL-GroES system forms a nano-cage that allows encapsulation of the non-native substrate proteins and provides a physical environment optimized to promote and accelerate protein folding. GroES binds to the apical surface of the GroEL ring, thereby capping the opening of the GroEL channel. This Thermosipho africanus (strain TCF52B) protein is Co-chaperonin GroES.